The sequence spans 327 residues: Protein-L-isoaspartate O-methyltransferase (327 aa).

Disordered regions lie at residues 1–38 (MSGE…DAAR) and 62–105 (PRAA…KSAT). Residues 14–29 (EDLKREPRKPEGRAAE) show a composition bias toward basic and acidic residues. Low complexity predominate over residues 62-77 (PRAAGASGSGVPVAKP). The span at 92-105 (APSSGVKNGDKSAT) shows a compositional bias: polar residues. The active site involves serine 175.

The protein belongs to the methyltransferase superfamily. L-isoaspartyl/D-aspartyl protein methyltransferase family.

It localises to the cytoplasm. It catalyses the reaction [protein]-L-isoaspartate + S-adenosyl-L-methionine = [protein]-L-isoaspartate alpha-methyl ester + S-adenosyl-L-homocysteine. Its function is as follows. Catalyzes the methyl esterification of L-isoaspartyl residues in peptides and proteins that result from spontaneous decomposition of normal L-aspartyl and L-asparaginyl residues. It plays a role in the repair and/or degradation of damaged proteins. The polypeptide is Protein-L-isoaspartate O-methyltransferase (Burkholderia thailandensis (strain ATCC 700388 / DSM 13276 / CCUG 48851 / CIP 106301 / E264)).